Here is a 338-residue protein sequence, read N- to C-terminus: UPF0324 membrane protein NMA0465 (338 aa).

A run of 10 helical transmembrane segments spans residues 5–23 (PFYF…ANYL), 33–55 (HISA…YPQF), 62–84 (GVLF…RLTF), 94–116 (AVVT…GIRY), 123–145 (LVYL…AESV), 155–177 (VAIA…FYTW), 222–239 (IRVM…WLLT), 254–273 (IPWF…FDLL), 280–302 (LFVE…TTHA), and 312–334 (PFVL…NYGI).

It belongs to the UPF0324 family.

The protein resides in the cell membrane. This is UPF0324 membrane protein NMA0465 from Neisseria meningitidis serogroup A / serotype 4A (strain DSM 15465 / Z2491).